The following is a 188-amino-acid chain: Large ribosomal subunit protein bL35m (188 aa).

This sequence belongs to the bacterial ribosomal protein bL35 family.

It localises to the mitochondrion. This chain is Large ribosomal subunit protein bL35m (MRPL35), found in Pongo abelii (Sumatran orangutan).